A 93-amino-acid polypeptide reads, in one-letter code: Small ribosomal subunit protein uS15 (93 aa).

The protein belongs to the universal ribosomal protein uS15 family. Part of the 30S ribosomal subunit. Forms a bridge to the 50S subunit in the 70S ribosome, contacting the 23S rRNA.

In terms of biological role, one of the primary rRNA binding proteins, it binds directly to 16S rRNA where it helps nucleate assembly of the platform of the 30S subunit by binding and bridging several RNA helices of the 16S rRNA. Its function is as follows. Forms an intersubunit bridge (bridge B4) with the 23S rRNA of the 50S subunit in the ribosome. The protein is Small ribosomal subunit protein uS15 of Ehrlichia canis (strain Jake).